The following is a 318-amino-acid chain: Receptor homology region, transmembrane domain- and RING domain-containing protein 6 (318 aa).

The N-terminal stretch at 1 to 20 is a signal peptide; sequence MNGSWITILSLLVISQLASS. The Lumenal portion of the chain corresponds to 22 to 162; that stretch reads VTLIGKNTFL…LIPGFGISSW (141 aa). C62 and C87 form a disulfide bridge. In terms of domain architecture, PA spans 70–143; that stretch reads EKGSKFRPSY…RTSGEVLKEY (74 aa). N-linked (GlcNAc...) asparagine glycosylation is present at N121. The helical transmembrane segment at 163-183 threads the bilayer; it reads SIMAITFVSLLVISAVLASYF. Over 184 to 318 the chain is Cytoplasmic; the sequence is SVRRHRIRQH…DLPIVVRVYL (135 aa). The RING-type; atypical zinc-finger motif lies at 233-275; it reads CAICIDDYRVGEILRILPCKHKYHAVCIDSWLGRCRSFCPVCK.

Its subcellular location is the prevacuolar compartment membrane. The protein resides in the protein storage vacuole membrane. In terms of biological role, involved in the trafficking of vacuolar proteins. May function as a sorting receptor for protein trafficking to the protein storage vacuole (PSV). This chain is Receptor homology region, transmembrane domain- and RING domain-containing protein 6 (RMR6), found in Arabidopsis thaliana (Mouse-ear cress).